Consider the following 62-residue polypeptide: Large ribosomal subunit protein bL28 (62 aa).

The protein belongs to the bacterial ribosomal protein bL28 family.

This Wolinella succinogenes (strain ATCC 29543 / DSM 1740 / CCUG 13145 / JCM 31913 / LMG 7466 / NCTC 11488 / FDC 602W) (Vibrio succinogenes) protein is Large ribosomal subunit protein bL28.